A 2339-amino-acid chain; its full sequence is Voltage-dependent N-type calcium channel subunit alpha-1B (2339 aa).

Residues 1–37 are disordered; sequence MVRFGDELGGRYGGPGGGERARGGGAGGAGGPGPGGL. Residues 1–90 lie on the Cytoplasmic side of the membrane; the sequence is MVRFGDELGG…DNVVRKYAKR (90 aa). Over residues 10 to 37 the composition is skewed to gly residues; that stretch reads GRYGGPGGGERARGGGAGGAGGPGPGGL. An Omega-N-methylarginine modification is found at arginine 22. One copy of the I repeat lies at 82–359; sequence NVVRKYAKRI…LVLGVLSGEF (278 aa). A helical membrane pass occupies residues 91–114; that stretch reads ITEWPPFEYMILATIIANCIVLAL. Over 115 to 131 the chain is Extracellular; it reads EQHLPDGDKTPMSERLD. The helical transmembrane segment at 132-152 threads the bilayer; sequence DTEPYFIGIFCFEAGIKIIAL. The Cytoplasmic portion of the chain corresponds to 153–163; sequence GFVFHKGSYLR. The chain crosses the membrane as a helical span at residues 164–182; sequence NGWNVMDFVVVLTGILATA. The Extracellular portion of the chain corresponds to 183–187; that stretch reads GTDFD. Residues 188 to 211 traverse the membrane as a helical segment; that stretch reads LRTLRAVRVLRPLKLVSGIPSLQV. The Cytoplasmic segment spans residues 212–221; sequence VLKSIMKAMV. A helical transmembrane segment spans residues 222–244; sequence PLLQIGLLLFFAILMFAIIGLEF. At 245-331 the chain is on the extracellular side; the sequence is YMGKFHKACF…NTNDAAGNTW (87 aa). Asparagine 256 is a glycosylation site (N-linked (GlcNAc...) asparagine). Residues 332 to 356 form a helical membrane-spanning segment; it reads NWLYFIPLIIIGSFFMLNLVLGVLS. The Cytoplasmic segment spans residues 357–482; that stretch reads GEFAKERERV…FFIRRMVKAQ (126 aa). Positions 379–396 are binding to the beta subunit; the sequence is QQIERELNGYLEWIFKAE. At serine 411 the chain carries Phosphoserine. 451-458 lines the ATP pocket; the sequence is ASLKSGKT. The II repeat unit spans residues 468 to 712; it reads EKMFRFFIRR…VFLAIAVDNL (245 aa). The helical transmembrane segment at 483-501 threads the bilayer; that stretch reads SFYWVVLCVVALNTLCVAM. Topologically, residues 502 to 511 are extracellular; the sequence is VHYNQPRRLT. Residues 512-534 form a helical membrane-spanning segment; it reads TTLYFAEFVFLGLFLTEMSLKMY. At 535–544 the chain is on the cytoplasmic side; that stretch reads GLGPRSYFRS. Serine 544 is a binding site for a 1,2-diacyl-sn-glycero-3-phospho-(1D-myo-inositol-4,5-bisphosphate). The chain crosses the membrane as a helical span at residues 545–566; that stretch reads SFNCFDFGVIVGSVFEVVWAAI. Topologically, residues 567–573 are extracellular; sequence KPGSSFG. A helical transmembrane segment spans residues 574-586; that stretch reads ISVLRALRLLRIF. Residues arginine 584 and lysine 587 each coordinate a 1,2-diacyl-sn-glycero-3-phospho-(1D-myo-inositol-4,5-bisphosphate). Residues 587–604 are Cytoplasmic-facing; the sequence is KVTKYWSSLRNLVVSLLN. A helical transmembrane segment spans residues 605–630; it reads SMKSIISLLFLLFLFIVVFALLGMQL. The Extracellular segment spans residues 631–682; that stretch reads FGGQFNFQDETPTTNFDTFPAAILTVFQILTGEDWNAVMYHGIESQGGVSKG. Residues 683 to 709 traverse the membrane as a helical segment; the sequence is MFSSFYFIVLTLFGNYTLLNVFLAIAV. Over 710–1151 the chain is Cytoplasmic; sequence DNLANAQELT…FCHYIVTMRY (442 aa). A phosphoserine mark is found at serine 745, serine 748, and serine 783. 4 stretches are compositionally biased toward basic and acidic residues: residues 816–826, 857–886, 922–932, and 965–976; these read PLVVELGRDGA, KDKT…EERP, GSPEEAAEREP, and GPREAESGEEPA. Disordered regions lie at residues 816–1038 and 1054–1076; these read PLVV…VTVG and QPED…DPNT. Residues 977 to 986 are compositionally biased toward basic residues; that stretch reads RRHRARHKAQ. Residues 990–1029 show a composition bias toward basic and acidic residues; it reads EAVEKETTEKEATEKEAEIVEADKEKELRNHQPREPHCDL. A Phosphoserine modification is found at serine 1069. Residues 1137 to 1419 form an III repeat; sequence NLLRRFCHYI…IFVALIIITF (283 aa). The helical transmembrane segment at 1152–1170 threads the bilayer; it reads FEVVILVVIALSSIALAAE. The Extracellular segment spans residues 1171–1178; that stretch reads DPVRTDSP. A helical transmembrane segment spans residues 1179–1203; sequence RNNALKYLDYIFTGVFTFEMVIKMI. Residues 1204-1217 are Cytoplasmic-facing; that stretch reads DLGLLLHPGAYFRD. The chain crosses the membrane as a helical span at residues 1218–1238; sequence LWNILDFIVVSGALVAFAFSG. The Extracellular portion of the chain corresponds to 1239 to 1244; it reads SKGKDI. A helical transmembrane segment spans residues 1245–1265; that stretch reads NTIKSLRVLRVLRPLKTIKRL. Residues 1266 to 1283 lie on the Cytoplasmic side of the membrane; it reads PKLKAVFDCVVNSLKNVL. A helical membrane pass occupies residues 1284–1303; it reads NILIVYMLFMFIFAVIAVQL. Topologically, residues 1304-1390 are extracellular; sequence FKGKFFYCTD…EQGPSPGYRM (87 aa). Residues 1391–1416 traverse the membrane as a helical segment; it reads ELSIFYVVYFVVFPFFFVNIFVALII. The Cytoplasmic portion of the chain corresponds to 1417 to 1471; it reads ITFQEQGDKVMSECSLEKNERACIDFAISAKPLTRYMPQNRQSFQYKTWTFVVSP. One copy of the IV repeat lies at 1456-1711; the sequence is NRQSFQYKTW…LFVAVIMDNF (256 aa). Residues 1472-1490 traverse the membrane as a helical segment; sequence PFEYFIMAMIALNTVVLMM. Topologically, residues 1491-1498 are extracellular; sequence KFYDAPYE. The helical transmembrane segment at 1499–1523 threads the bilayer; it reads YELMLKCLNIVFTSMFSMECVLKII. Residues 1524 to 1533 lie on the Cytoplasmic side of the membrane; sequence AFGVLNYFRD. Residues 1534 to 1555 form a helical membrane-spanning segment; that stretch reads AWNVFDFVTVLGSITDILVTEI. Residues 1556–1563 lie on the Extracellular side of the membrane; the sequence is AETNNFIN. Asparagine 1563 carries an N-linked (GlcNAc...) asparagine glycan. A helical membrane pass occupies residues 1564-1582; sequence LSFLRLFRAARLIKLLRQG. Over 1583 to 1601 the chain is Cytoplasmic; it reads YTIRILLWTFVQSFKALPY. The helical transmembrane segment at 1602 to 1621 threads the bilayer; the sequence is VCLLIAMLFFIYAIIGMQVF. Topologically, residues 1622–1683 are extracellular; that stretch reads GNIALDDDTS…ANATECGSDF (62 aa). A glycan (N-linked (GlcNAc...) asparagine) is linked at asparagine 1675. The chain crosses the membrane as a helical span at residues 1684–1707; sequence AYFYFVSFIFLCSFLMLNLFVAVI. The Cytoplasmic segment spans residues 1708 to 2339; that stretch reads MDNFEYLTRD…YHHPDQDHWC (632 aa). In terms of domain architecture, EF-hand spans 1724–1759; the sequence is HHLDEFIRVWAEYDPAACGRISYNDMFEMLKHMSPP. Positions 1737, 1743, and 1748 each coordinate Ca(2+). Over residues 1916–1931 the composition is skewed to polar residues; the sequence is SSTSLSNGGAIQNQES. Disordered regions lie at residues 1916-1968 and 1981-2206; these read SSTS…VGRS and TRRG…YKTA. Basic and acidic residues predominate over residues 1946–1960; that stretch reads DAPHEARPPLERGHS. Residues 2049–2063 are compositionally biased toward basic residues; sequence SHHHHHRCHRRRDRK. Residue serine 2066 is modified to Phosphoserine. A compositionally biased stretch (basic and acidic residues) spans 2098 to 2116; sequence CRRERERRQERGRSQERRQ. Positions 2143–2153 are enriched in low complexity; it reads PSLSSHPTSPT. A compositionally biased stretch (polar residues) spans 2164-2180; it reads GSGSVNGSPLLSTSGAS. Phosphoserine is present on residues serine 2224, serine 2233, and serine 2256.

It belongs to the calcium channel alpha-1 subunit (TC 1.A.1.11) family. CACNA1B subfamily. As to quaternary structure, multisubunit complex consisting of alpha-1, alpha-2, beta and delta subunits in a 1:1:1:1 ratio. The channel activity is directed by the pore-forming and voltage-sensitive alpha-1 subunit. In many cases, this subunit is sufficient to generate voltage-sensitive calcium channel activity. The auxiliary subunits beta and alpha-2/delta linked by a disulfide bridge regulate the channel activity. Interacts with RIMS1. Interacts with FMR1 (via C-terminus); this interaction induces a decrease in the number of presynaptic functional CACNA1B channels at the cell surface. Post-translationally, phosphorylated in vitro by CaM-kinase II, PKA, PKC and CGPK. Isoform Alpha-1b-1 and isoform Alpha-1b-2 are expressed in the central nervous system, but not in skeletal muscle or aorta. Expressed in the cerebral white matter, cortex, hippocampus, basal ganglia, and cerebellum.

The protein resides in the membrane. It catalyses the reaction Ca(2+)(in) = Ca(2+)(out). Its activity is regulated as follows. Is specifically blocked by omega-conotoxin GVIA. Is specifically blocked by omega-conotoxin MVIIA (ziconotide). Is insensitive to dihydropyridines (DHP). With respect to regulation, is specifically blocked by omega-conotoxin MVIIA (ziconotide). Is insensitive to dihydropyridines (DHP). Its function is as follows. Voltage-sensitive calcium channels (VSCC) mediate the entry of calcium ions into excitable cells and are also involved in a variety of calcium-dependent processes, including muscle contraction, hormone or neurotransmitter release, gene expression, cell motility, cell division and cell death. This alpha-1B subunit gives rise to N-type calcium currents. N-type calcium channels belong to the 'high-voltage activated' (HVA) group. They are involved in pain signaling. Calcium channels containing alpha-1B subunit may play a role in directed migration of immature neurons. Mediates Ca(2+) release probability at hippocampal neuronal soma and synaptic terminals. In terms of biological role, voltage-sensitive calcium channels (VSCC) mediate the entry of calcium ions into excitable cells and are also involved in a variety of calcium-dependent processes, including muscle contraction, hormone or neurotransmitter release, gene expression, cell motility, cell division and cell death. This alpha-1B subunit gives rise to N-type calcium currents. This chain is Voltage-dependent N-type calcium channel subunit alpha-1B (CACNA1B), found in Homo sapiens (Human).